A 360-amino-acid polypeptide reads, in one-letter code: Mannitol-1-phosphate 5-dehydrogenase (360 aa).

A6–G17 contacts NAD(+).

Belongs to the mannitol dehydrogenase family.

It catalyses the reaction D-mannitol 1-phosphate + NAD(+) = beta-D-fructose 6-phosphate + NADH + H(+). The polypeptide is Mannitol-1-phosphate 5-dehydrogenase (Mycoplasmopsis pulmonis (strain UAB CTIP) (Mycoplasma pulmonis)).